Reading from the N-terminus, the 612-residue chain is MAAAGRLPSSWALFSPLLAGLALLGVGPVPARALHNVTAELFGAEAWGTLAAFGDLNSDKQTDLFVLRERNDLIVFLADQNAPYFKPKVKVSFKNHSALITSVVPGDYDGDSQMDVLLTYLPKNYAKSELGAVIFWGQNQTLDPNNMTILNRTFQDEPLIMDFNGDLIPDIFGITNESNQPQILLGGNLSWHPALTTTSKMRIPHSHAFIDLTEDFTADLFLTTLNATTSTFQFEIWENLDGNFSVSTILEKPQNMMVVGQSAFADFDGDGHMDHLLPGCEDKNCQKSTIYLVRSGMKQWVPVLQDFSNKGTLWGFVPFVDEQQPTEIPIPITLHIGDYNMDGYPDALVILKNTSGSNQQAFLLENVPCNNASCEEARRMFKVYWELTDLNQIKDAMVATFFDIYEDGILDIVVLSKGYTKNDFAIHTLKNNFEADAYFVKVIVLSGLCSNDCPRKITPFGVNQPGPYIMYTTVDANGYLKNGSAGQLSQSAHLALQLPYNVLGLGRSANFLDHLYVGIPRPSGEKSIRKQEWTAIIPNSQLIVIPYPHNVPRSWSAKLYLTPSNIVLLTAIALIGVCVFILAIIGILHWQEKKADDREKRQEAHRFHFDAM.

The signal sequence occupies residues 1-33; that stretch reads MAAAGRLPSSWALFSPLLAGLALLGVGPVPARA. Asparagine 36, asparagine 95, asparagine 139, asparagine 146, asparagine 151, asparagine 176, asparagine 188, asparagine 226, and asparagine 243 each carry an N-linked (GlcNAc...) asparagine glycan. The FG-GAP; atypical repeat unit spans residues 258–293; sequence VVGQSAFADFDGDGHMDHLLPGCEDKNCQKSTIYLV. N-linked (GlcNAc...) asparagine glycans are attached at residues asparagine 353, asparagine 371, and asparagine 482. The helical transmembrane segment at 567–587 threads the bilayer; that stretch reads VLLTAIALIGVCVFILAIIGI.

It belongs to the TIP family. Interacts with RUVBL1, RUVBL2 and alpha-tubulin. Ubiquitously expressed.

Its subcellular location is the secreted. The protein localises to the membrane. Modulator of T-cell function. Has a protective effect in graft versus host disease model. The chain is T-cell immunomodulatory protein from Homo sapiens (Human).